A 314-amino-acid chain; its full sequence is Small ribosomal subunit protein uS2c (314 aa).

Belongs to the universal ribosomal protein uS2 family.

The protein localises to the plastid. It is found in the chloroplast. This is Small ribosomal subunit protein uS2c (rps2) from Stigeoclonium helveticum (Green alga).